Reading from the N-terminus, the 507-residue chain is Cytochrome P450 4X1 (507 aa).

A helical membrane pass occupies residues 14–34 (LHLALVFCLALVLMQAMKLYL). Cys452 is a binding site for heme.

The protein belongs to the cytochrome P450 family. Requires heme as cofactor. Expressed in brain and aorta. In the brain, expressed in the Purkinje cells of the cerebellum, pyramidal neurons in the dentate gyrus of the hippocampus, cortical forebrain neurons and those of brain stem nuclei (at protein level). In addition to neurons, also expressed in cerebral vascular endothelial cells (at protein level). Also expressed in epithelial cells of the choroid plexus (at protein level). Hardly detectable in heart, lung, kidney and spleen.

It is found in the endoplasmic reticulum membrane. The protein resides in the microsome membrane. The catalysed reaction is N-(5Z,8Z,11Z,14Z-eicosatetraenoyl)-ethanolamine + reduced [NADPH--hemoprotein reductase] + O2 = N-(14,15-epoxy-5Z,8Z,11Z-eicosatrienoyl)-ethanolamine + oxidized [NADPH--hemoprotein reductase] + H2O + H(+). A cytochrome P450 monooxygenase that selectively catalyzes the epoxidation of the last double bond of the arachidonoyl moiety of anandamide, potentially modulating endocannabinoid signaling. Has no hydroxylase activity toward various fatty acids, steroids and prostaglandins. Mechanistically, uses molecular oxygen inserting one oxygen atom into a substrate, and reducing the second into a water molecule, with two electrons provided by NADPH via cytochrome P450 reductase (CPR; NADPH-ferrihemoprotein reductase). The protein is Cytochrome P450 4X1 of Mus musculus (Mouse).